The sequence spans 158 residues: Deoxyuridine 5'-triphosphate nucleotidohydrolase (158 aa).

Substrate is bound by residues 66–68 (RSG), Asn-79, 83–85 (TID), and Lys-93. The tract at residues 139–158 (RGFGSSGVARKGHYQGKPLA) is disordered.

It belongs to the dUTPase family. Mg(2+) serves as cofactor.

The enzyme catalyses dUTP + H2O = dUMP + diphosphate + H(+). It functions in the pathway pyrimidine metabolism; dUMP biosynthesis; dUMP from dCTP (dUTP route): step 2/2. Its function is as follows. This enzyme is involved in nucleotide metabolism: it produces dUMP, the immediate precursor of thymidine nucleotides and it decreases the intracellular concentration of dUTP so that uracil cannot be incorporated into DNA. The sequence is that of Deoxyuridine 5'-triphosphate nucleotidohydrolase from Helicobacter hepaticus (strain ATCC 51449 / 3B1).